The following is a 596-amino-acid chain: Elongation factor 4 (596 aa).

The tr-type G domain maps to 2 to 184 (KHIRNFSIIA…VIVDQIPPPE (183 aa)). GTP-binding positions include 14 to 19 (DHGKST) and 131 to 134 (NKID).

The protein belongs to the TRAFAC class translation factor GTPase superfamily. Classic translation factor GTPase family. LepA subfamily.

Its subcellular location is the cell inner membrane. It catalyses the reaction GTP + H2O = GDP + phosphate + H(+). Required for accurate and efficient protein synthesis under certain stress conditions. May act as a fidelity factor of the translation reaction, by catalyzing a one-codon backward translocation of tRNAs on improperly translocated ribosomes. Back-translocation proceeds from a post-translocation (POST) complex to a pre-translocation (PRE) complex, thus giving elongation factor G a second chance to translocate the tRNAs correctly. Binds to ribosomes in a GTP-dependent manner. This Shewanella sp. (strain ANA-3) protein is Elongation factor 4.